We begin with the raw amino-acid sequence, 480 residues long: Alpha-glucosidase (480 aa).

Residue valine 4–serine 70 participates in NAD(+) binding. Aspartate 119 and asparagine 153 together coordinate substrate. Cysteine 174 provides a ligand contact to Mn(2+). The Proton donor role is filled by histidine 175. Residue histidine 203 coordinates Mn(2+). Aspartate 260 serves as the catalytic Proton acceptor.

It belongs to the glycosyl hydrolase 4 family. As to quaternary structure, homodimer. It depends on NAD(+) as a cofactor. Mn(2+) is required as a cofactor.

It carries out the reaction Hydrolysis of terminal, non-reducing (1-&gt;4)-linked alpha-D-glucose residues with release of alpha-D-glucose.. Its activity is regulated as follows. Inhibited by EDTA in vitro. Its function is as follows. Is able to hydrolyze diverse types of alpha-glycoside bonds in di- and trisaccharides: alpha-1,4 bonds of maltose and maltotriose, alpha-1,1 bonds of trehalose, alpha-1,2 bonds of sucrose, alpha-1,3 bonds of turanose and melizitose, alpha-1,6 bonds of isomaltose and melibiose. AglA is not specific with respect to the configuration at the C-4 position of its substrates because it also possesses alpha-galactosidase activity. Acts on the substrate from the non-reducing end of the chain. The activity of AglA drops with increasing length of the saccharide chain. Does not hydrolyze alpha-, beta-, and gamma-cyclodextrins or polysaccharides (starch, pullulan, amylose, amylopectin, glycogen). Does not cleave beta-glycosidic bonds in di-, oligo-, or polysaccharides. This is Alpha-glucosidase (aglA) from Thermotoga neapolitana.